The chain runs to 411 residues: Protein phosphatase 1 regulatory subunit 36 (411 aa).

As to quaternary structure, interacts with PPP1CA.

Inhibits phosphatase activity of protein phosphatase 1 (PP1) complexes. The chain is Protein phosphatase 1 regulatory subunit 36 (Ppp1r36) from Rattus norvegicus (Rat).